A 250-amino-acid polypeptide reads, in one-letter code: Flavin-dependent thymidylate synthase (250 aa).

In terms of domain architecture, ThyX spans 7–233; sequence LRVQLIAKTE…PAVFADFEVT (227 aa). Residues 92-95, 103-107, and Arg-172 contribute to the dUMP site; these read ELIR and QLSQR. FAD contacts are provided by residues 95-97 and Gln-103; that span reads RHR. The short motif at 95-105 is the ThyX motif element; that stretch reads RHRHFSYSQLS. Residues 188 to 190 and His-194 contribute to the FAD site; that span reads NYR. Position 199 (Arg-199) interacts with dUMP. Catalysis depends on Arg-199, which acts as the Involved in ionization of N3 of dUMP, leading to its activation.

The protein belongs to the thymidylate synthase ThyX family. Homotetramer. It depends on FAD as a cofactor.

The catalysed reaction is dUMP + (6R)-5,10-methylene-5,6,7,8-tetrahydrofolate + NADPH + H(+) = dTMP + (6S)-5,6,7,8-tetrahydrofolate + NADP(+). It participates in pyrimidine metabolism; dTTP biosynthesis. Functionally, catalyzes the reductive methylation of 2'-deoxyuridine-5'-monophosphate (dUMP) to 2'-deoxythymidine-5'-monophosphate (dTMP) while utilizing 5,10-methylenetetrahydrofolate (mTHF) as the methyl donor, and NADPH and FADH(2) as the reductant. This chain is Flavin-dependent thymidylate synthase, found in Mycobacterium marinum (strain ATCC BAA-535 / M).